A 200-amino-acid polypeptide reads, in one-letter code: Late embryogenesis abundant protein 19 (200 aa).

2 disordered regions span residues 1–145 and 172–200; these read MASH…KTGS and TEDE…ARDH. Composition is skewed to basic and acidic residues over residues 13 to 23, 30 to 42, 53 to 81, 88 to 97, and 105 to 114; these read GETKAHTEEKA, SKDK…DRAS, QDTK…KDKT, ARDKAAESKD, and EKTEQAKQKA. Positions 52–81 form a coiled coil; that stretch reads GQDTKEATKEKAQAAKERASETAQAAKDKT. 2 stretches are compositionally biased toward low complexity: residues 115–130 and 186–200; these read AETA…ETAQ and TSAT…ARDH.

The protein belongs to the LEA type 4 family.

Its function is as follows. Involved in response to stress. The polypeptide is Late embryogenesis abundant protein 19 (Oryza sativa subsp. japonica (Rice)).